Consider the following 701-residue polypeptide: Glycine--tRNA ligase beta subunit (701 aa).

The protein belongs to the class-II aminoacyl-tRNA synthetase family. Tetramer of two alpha and two beta subunits.

Its subcellular location is the cytoplasm. The catalysed reaction is tRNA(Gly) + glycine + ATP = glycyl-tRNA(Gly) + AMP + diphosphate. This chain is Glycine--tRNA ligase beta subunit, found in Nitratidesulfovibrio vulgaris (strain DSM 19637 / Miyazaki F) (Desulfovibrio vulgaris).